The chain runs to 323 residues: 4-hydroxy-3-methylbut-2-enyl diphosphate reductase (323 aa).

Residue C12 coordinates [4Fe-4S] cluster. (2E)-4-hydroxy-3-methylbut-2-enyl diphosphate-binding residues include H43 and H81. Residues H43 and H81 each contribute to the dimethylallyl diphosphate site. Isopentenyl diphosphate-binding residues include H43 and H81. C103 provides a ligand contact to [4Fe-4S] cluster. Residue H131 participates in (2E)-4-hydroxy-3-methylbut-2-enyl diphosphate binding. Dimethylallyl diphosphate is bound at residue H131. H131 is an isopentenyl diphosphate binding site. The active-site Proton donor is the E133. Residue T170 coordinates (2E)-4-hydroxy-3-methylbut-2-enyl diphosphate. C198 is a [4Fe-4S] cluster binding site. Residues S226, N228, and S271 each contribute to the (2E)-4-hydroxy-3-methylbut-2-enyl diphosphate site. Dimethylallyl diphosphate-binding residues include S226, N228, and S271. Isopentenyl diphosphate contacts are provided by S226, N228, and S271.

It belongs to the IspH family. The cofactor is [4Fe-4S] cluster.

The catalysed reaction is isopentenyl diphosphate + 2 oxidized [2Fe-2S]-[ferredoxin] + H2O = (2E)-4-hydroxy-3-methylbut-2-enyl diphosphate + 2 reduced [2Fe-2S]-[ferredoxin] + 2 H(+). It carries out the reaction dimethylallyl diphosphate + 2 oxidized [2Fe-2S]-[ferredoxin] + H2O = (2E)-4-hydroxy-3-methylbut-2-enyl diphosphate + 2 reduced [2Fe-2S]-[ferredoxin] + 2 H(+). The protein operates within isoprenoid biosynthesis; dimethylallyl diphosphate biosynthesis; dimethylallyl diphosphate from (2E)-4-hydroxy-3-methylbutenyl diphosphate: step 1/1. It participates in isoprenoid biosynthesis; isopentenyl diphosphate biosynthesis via DXP pathway; isopentenyl diphosphate from 1-deoxy-D-xylulose 5-phosphate: step 6/6. Its function is as follows. Catalyzes the conversion of 1-hydroxy-2-methyl-2-(E)-butenyl 4-diphosphate (HMBPP) into a mixture of isopentenyl diphosphate (IPP) and dimethylallyl diphosphate (DMAPP). Acts in the terminal step of the DOXP/MEP pathway for isoprenoid precursor biosynthesis. The chain is 4-hydroxy-3-methylbut-2-enyl diphosphate reductase from Lysinibacillus sphaericus (strain C3-41).